Reading from the N-terminus, the 93-residue chain is Alpha-defensin 10 (93 aa).

The N-terminal stretch at 1–19 is a signal peptide; sequence MKTLVLLSALVLLAFQVQA. Residues 20–58 constitute a propeptide that is removed on maturation; it reads DPIQNTDEETKTEEQPGEDDQAVSVSFGDPEGSSLQEES. The interval 22–56 is disordered; it reads IQNTDEETKTEEQPGEDDQAVSVSFGDPEGSSLQE. Cystine bridges form between cysteine 64-cysteine 92, cysteine 66-cysteine 81, and cysteine 71-cysteine 91.

Belongs to the alpha-defensin family. As to expression, paneth cells of the small bowel.

Its subcellular location is the secreted. In terms of biological role, probably contributes to the antimicrobial barrier function of the small bowel mucosa. The polypeptide is Alpha-defensin 10 (Defa10) (Mus musculus (Mouse)).